A 1386-amino-acid polypeptide reads, in one-letter code: MAERANLVFHNKVIGGTAIKRLISRLIDHFGMAYTSHILDQVKTLGFRQATDTSISLGIDDLLTIPSKGWLVQDAEQQSLILEQHHHYGNVHAVEKLRQSIEIWYATSEYFRQEMNPNFRMTDPFNPVHIMSFSGARGNASQVHQLVGMRGLMSDPQGQMIDLPIQSNLREGLSLTEYIISCYGARKGVVDTAVRTSDAGYLTRRLVEVVQHIVVRRTDCGTIQGISVNTQNGMMPERIWIQTLIGRVLADDIYRGSRCIAVRNQDIGIGLINRFKTLQTQPISIRTPFTCRNTSWICRLCYGQSPTHGHLVELGEAVGIIAGQSIGEPGTQLTLRTFHTGGVFTGGTAEQVRAPYNGKIQFNEDLVHPTRTRHGHPAFLCYIDLYVTIESGDIIHNVTIPPKSFLLVQNNQYVKSEQVIAEIRAGTYTFNLKEKVRKHVYSDLEGEMHWSTDVYHASEFRYSNVHILPKTSHLWILSGKSYRSGSVSFSIRKDQDQMNIHYLSTGERDFCNLLASKKKVRHKLFRFNPSDKKERRISDYSIFNQIISIDHCHFTHPTIFHDTTDLLAKRRRNRLIIPFQFQSIQERDKELMLASSISIEIPINGIFRRNSILAYFDDPQYRTQSSGITKYRTIGINSIFKKEDFLIEYQGVKEFKTKYQIKVDQFFFIPEEVHILPESSSIMVRNNSIVEVDTLITLNIRSRVRGLVRLEKKKKKIELKIFSGDIYFPGEMDKISRHSAVLIPPRTVKKNSKEKKMKNWIYVQWITITKKKYFVLVRPVILYEIADRINLVKLFPQDMFQERDNLELKVINYILSGNGKSIRGISDTSIQLVRTCLVLNWDQDKKFSSIENAHASFVEISIKGLVRYFLRIDLVKSHISYIRKRNNPPGSRFILDNESDRTTINPFFSIDSREKIQQSLSKNHGTIRMLLNRNEKCRSLIILSSSNCFQIRSFNHGKYYNGIKEGINQIQRDAMIPIKNSLGPLGIAPQVAHFDFYRLITHNQISIIKNGQLDKLKETFQVFQYYFLDENERIYKPDLCSNIILNPFYLNWHFLHHNYCEKTFTIMSLGQFICENVCIVQTKNAPHLKSGQILTVQMDSVGIRSANPYLATPGATVHGHYGEILSEGDILVTFIYEKSRSGDITQGLPKVEQVLEVRSIDSISMNLEKRVDTWNGRITKILGIPWGFLIGAELTIAQSRISLVNKIQKVYRSQGVHIHNRHIEIIVRQITSKVLVSEDGMSNVFLPGELIGLLRAERAGRSLEEAICYRVLLLGITKTSLNTQSFISEASFQETARVLSKAALRGRIDWLKGLKENVVLGGMIPVGTGFKRIMNRSKQRQYNKMTSETKKKNLFEGEMRDILFHHREFFFFVSKNLCDTSQQSSI.

Zn(2+) contacts are provided by C220, C291, C298, and C301.

It belongs to the RNA polymerase beta' chain family. RpoC2 subfamily. As to quaternary structure, in plastids the minimal PEP RNA polymerase catalytic core is composed of four subunits: alpha, beta, beta', and beta''. When a (nuclear-encoded) sigma factor is associated with the core the holoenzyme is formed, which can initiate transcription. Zn(2+) serves as cofactor.

It localises to the plastid. It is found in the chloroplast. It catalyses the reaction RNA(n) + a ribonucleoside 5'-triphosphate = RNA(n+1) + diphosphate. Functionally, DNA-dependent RNA polymerase catalyzes the transcription of DNA into RNA using the four ribonucleoside triphosphates as substrates. The sequence is that of DNA-directed RNA polymerase subunit beta'' from Glycine max (Soybean).